Here is a 367-residue protein sequence, read N- to C-terminus: Anthranilate phosphoribosyltransferase (367 aa).

Residues Gly-105, 108–109 (GD), Thr-113, 115–118 (NIST), 133–141 (KHGNRAASS), and Gly-145 each bind 5-phospho-alpha-D-ribose 1-diphosphate. Residue Gly-105 coordinates anthranilate. Mg(2+) is bound at residue Ser-117. Asn-136 provides a ligand contact to anthranilate. Arg-191 contacts anthranilate. Positions 249 and 250 each coordinate Mg(2+).

It belongs to the anthranilate phosphoribosyltransferase family. As to quaternary structure, homodimer. Mg(2+) is required as a cofactor.

It carries out the reaction N-(5-phospho-beta-D-ribosyl)anthranilate + diphosphate = 5-phospho-alpha-D-ribose 1-diphosphate + anthranilate. Its pathway is amino-acid biosynthesis; L-tryptophan biosynthesis; L-tryptophan from chorismate: step 2/5. Its function is as follows. Catalyzes the transfer of the phosphoribosyl group of 5-phosphorylribose-1-pyrophosphate (PRPP) to anthranilate to yield N-(5'-phosphoribosyl)-anthranilate (PRA). The chain is Anthranilate phosphoribosyltransferase from Corynebacterium jeikeium (strain K411).